A 268-amino-acid polypeptide reads, in one-letter code: Glucosamine-6-phosphate deaminase (268 aa).

The active-site Proton acceptor; for enolization step is Asp-72. The active-site For ring-opening step is the Asp-141. His-143 functions as the Proton acceptor; for ring-opening step in the catalytic mechanism. Glu-148 serves as the catalytic For ring-opening step.

The protein belongs to the glucosamine/galactosamine-6-phosphate isomerase family. NagB subfamily. Homohexamer.

It catalyses the reaction alpha-D-glucosamine 6-phosphate + H2O = beta-D-fructose 6-phosphate + NH4(+). Its pathway is amino-sugar metabolism; N-acetylneuraminate degradation; D-fructose 6-phosphate from N-acetylneuraminate: step 5/5. With respect to regulation, allosterically activated by N-acetylglucosamine 6-phosphate (GlcNAc6P). Its function is as follows. Catalyzes the reversible isomerization-deamination of glucosamine 6-phosphate (GlcN6P) to form fructose 6-phosphate (Fru6P) and ammonium ion. This is Glucosamine-6-phosphate deaminase from Histophilus somni (strain 129Pt) (Haemophilus somnus).